Consider the following 113-residue polypeptide: Urotensin-2B (113 aa).

The N-terminal stretch at 1–27 (MKVFSTSLWCGLLTLLSVMNLFKSVRG) is a signal peptide. Residues 28–103 (RPHLSSGHEL…LDNLSSSHTK (76 aa)) constitute a propeptide that is removed on maturation. A disulfide bond links Cys107 and Cys112.

This sequence belongs to the urotensin-2 family.

The protein resides in the secreted. In terms of biological role, potent vasoconstrictor. This is Urotensin-2B (Uts2b) from Mus musculus (Mouse).